The primary structure comprises 86 residues: MAKQRKNAPGFEESVARLEEIIRLTEAPVTELEDMIALVEEGNKLIRHCRSILHDAELRIQTLSNPETVQDKTDTDEPDSNEFSLT.

The tract at residues 64–86 (SNPETVQDKTDTDEPDSNEFSLT) is disordered.

It belongs to the XseB family. Heterooligomer composed of large and small subunits.

The protein resides in the cytoplasm. It catalyses the reaction Exonucleolytic cleavage in either 5'- to 3'- or 3'- to 5'-direction to yield nucleoside 5'-phosphates.. Bidirectionally degrades single-stranded DNA into large acid-insoluble oligonucleotides, which are then degraded further into small acid-soluble oligonucleotides. The polypeptide is Exodeoxyribonuclease 7 small subunit (Akkermansia muciniphila (strain ATCC BAA-835 / DSM 22959 / JCM 33894 / BCRC 81048 / CCUG 64013 / CIP 107961 / Muc)).